A 29-amino-acid polypeptide reads, in one-letter code: Lambda-theraphotoxin-Ec2b (29 aa).

3 disulfides stabilise this stretch: Cys-2/Cys-16, Cys-9/Cys-21, and Cys-15/Cys-25.

This sequence belongs to the neurotoxin 30 (phrixotoxin) family. Expressed by the venom gland.

The protein localises to the secreted. Functionally, insect-selective neurotoxin that potently blocks insect calcium-activated potassium (BKCa) channels (Slo-type) in cockroach dorsal unpaired median (DUM) neurons (IC(50)=25.3 nM). This occurs in the absence of any shifts in the voltage dependence of activation. May interact with the turret and/or loop region of the external entrance to the channel and does not project deeply into the pore of the channel. In vivo, does not show toxicity in mice after intracerebroventricular injection of up to 25 pmol/g (1.8 ug/20 g mouse). In Eucratoscelus constrictus (African red-rump baboon spider), this protein is Lambda-theraphotoxin-Ec2b.